A 77-amino-acid polypeptide reads, in one-letter code: Conotoxin Ar5.1 b (77 aa).

The signal sequence occupies residues 1–19 (MLCLPVFIILLLLASPAAS). Positions 20-44 (NPLKTRIQSDLIRAALEDADMKNEK) are excised as a propeptide.

It belongs to the conotoxin T superfamily. In terms of processing, contains 2 disulfide bonds that can be either 'C1-C3, C2-C4' or 'C1-C4, C2-C3', since these disulfide connectivities have been observed for conotoxins with cysteine framework V (for examples, see AC P0DQQ7 and AC P81755). In terms of tissue distribution, expressed by the venom duct.

It localises to the secreted. This chain is Conotoxin Ar5.1 b, found in Conus arenatus (Sand-dusted cone).